An 86-amino-acid chain; its full sequence is Large ribosomal subunit protein bL31B (86 aa).

Belongs to the bacterial ribosomal protein bL31 family. Type B subfamily. In terms of assembly, part of the 50S ribosomal subunit.

In Streptococcus equi subsp. equi (strain 4047), this protein is Large ribosomal subunit protein bL31B.